Here is a 739-residue protein sequence, read N- to C-terminus: tRNA 5-methylaminomethyl-2-thiouridine biosynthesis bifunctional protein MnmC (739 aa).

The interval 1–282 is tRNA (mnm(5)s(2)U34)-methyltransferase; the sequence is MDKVTPAKLS…KREMLTATKL (282 aa). The FAD-dependent cmnm(5)s(2)U34 oxidoreductase stretch occupies residues 330–739; it reads IGAGVCGLMA…HRSSLKKPLS (410 aa).

The protein in the N-terminal section; belongs to the methyltransferase superfamily. tRNA (mnm(5)s(2)U34)-methyltransferase family. It in the C-terminal section; belongs to the DAO family. Requires FAD as cofactor.

It is found in the cytoplasm. The catalysed reaction is 5-aminomethyl-2-thiouridine(34) in tRNA + S-adenosyl-L-methionine = 5-methylaminomethyl-2-thiouridine(34) in tRNA + S-adenosyl-L-homocysteine + H(+). Its function is as follows. Catalyzes the last two steps in the biosynthesis of 5-methylaminomethyl-2-thiouridine (mnm(5)s(2)U) at the wobble position (U34) in tRNA. Catalyzes the FAD-dependent demodification of cmnm(5)s(2)U34 to nm(5)s(2)U34, followed by the transfer of a methyl group from S-adenosyl-L-methionine to nm(5)s(2)U34, to form mnm(5)s(2)U34. The sequence is that of tRNA 5-methylaminomethyl-2-thiouridine biosynthesis bifunctional protein MnmC from Psychrobacter sp. (strain PRwf-1).